A 1401-amino-acid polypeptide reads, in one-letter code: DNA-directed RNA polymerase subunit beta (1401 aa).

The protein belongs to the RNA polymerase beta chain family. As to quaternary structure, the RNAP catalytic core consists of 2 alpha, 1 beta, 1 beta' and 1 omega subunit. When a sigma factor is associated with the core the holoenzyme is formed, which can initiate transcription.

The catalysed reaction is RNA(n) + a ribonucleoside 5'-triphosphate = RNA(n+1) + diphosphate. Functionally, DNA-dependent RNA polymerase catalyzes the transcription of DNA into RNA using the four ribonucleoside triphosphates as substrates. In Desulforapulum autotrophicum (strain ATCC 43914 / DSM 3382 / VKM B-1955 / HRM2) (Desulfobacterium autotrophicum), this protein is DNA-directed RNA polymerase subunit beta.